The chain runs to 443 residues: Ribosomal protein uS12 methylthiotransferase RimO (443 aa).

Residues 5-115 (PNIGFISLGC…VMKHVHKYVP (111 aa)) form the MTTase N-terminal domain. [4Fe-4S] cluster-binding residues include Cys14, Cys50, Cys79, Cys147, Cys151, and Cys154. A Radical SAM core domain is found at 133–374 (LTPKHYAYLK…MQVQQRISAA (242 aa)). The region spanning 377 to 443 (QQKVGKTLAV…ADEYDLWGTC (67 aa)) is the TRAM domain.

It belongs to the methylthiotransferase family. RimO subfamily. It depends on [4Fe-4S] cluster as a cofactor.

It is found in the cytoplasm. The enzyme catalyses L-aspartate(89)-[ribosomal protein uS12]-hydrogen + (sulfur carrier)-SH + AH2 + 2 S-adenosyl-L-methionine = 3-methylsulfanyl-L-aspartate(89)-[ribosomal protein uS12]-hydrogen + (sulfur carrier)-H + 5'-deoxyadenosine + L-methionine + A + S-adenosyl-L-homocysteine + 2 H(+). Catalyzes the methylthiolation of an aspartic acid residue of ribosomal protein uS12. The protein is Ribosomal protein uS12 methylthiotransferase RimO of Actinobacillus pleuropneumoniae serotype 7 (strain AP76).